The primary structure comprises 363 residues: Adenosine deaminase (363 aa).

Residues histidine 42 and histidine 44 each contribute to the Zn(2+) site. Residues histidine 44–aspartate 46, aspartate 172, and glycine 201 contribute to the a purine D-ribonucleoside site. The tract at residues isoleucine 170–alanine 184 is gating helix loop; regulates binding affinity for substrates and thus substrate selectivity. A Zn(2+)-binding site is contributed by histidine 226. A purine D-ribonucleoside contacts are provided by glutamate 229, histidine 253, and aspartate 310. Residue aspartate 310 coordinates Zn(2+).

This sequence belongs to the metallo-dependent hydrolases superfamily. Adenosine and AMP deaminases family. The cofactor is Zn(2+).

It catalyses the reaction adenosine + H2O + H(+) = inosine + NH4(+). The enzyme catalyses S-methyl-5'-thioadenosine + H2O + H(+) = S-methyl-5'-thioinosine + NH4(+). It participates in purine metabolism; purine nucleoside salvage. With respect to regulation, inhibited by coformycin and methylthiocoformycin (MT-coformycin). Its function is as follows. Catalyzes the hydrolytic deamination of adenosine to produce inosine. Unlike mammalian adenosine deaminases, also catalyzes the deamination of 5'-methylthioadenosine (MTA), a by-product of polyamine biosynthesis, to produce 5'-methylthioinosine (MTI). Plays an essential role in the purine salvage pathway which allows the parasite to use host cell purines for the synthesis of nucleic acids. The polypeptide is Adenosine deaminase (Plasmodium cynomolgi (strain B)).